Consider the following 378-residue polypeptide: Cytochrome P450 monooxygenase pytD (378 aa).

Position 321 (C321) interacts with heme.

Belongs to the cytochrome P450 family. Heme is required as a cofactor.

Its pathway is secondary metabolite biosynthesis. Cytochrome P450 monooxygenase pytD; part of the gene cluster that mediates the biosynthesis of pyranterreones, a family of antioxidative compounds. The first step of pyranonigrins biosynthesis is performed by the hybrid PKS-NRPS synthetase pytA that condenses 4 malonyl-CoA units ato the acetyl starter unit by the modular PKS of pytA. The acyl chain is then connected to an L-serine through the amide bond by the modular NRPS of pytA. A tetramic acid is formed and released from the PKS-NRPS pytA to give pyranterreone 5 with the help of the thioesterase pytI. Pyranterreone 5 could be methylated by pytC to afford pyranterreone 6. Both pyranterreones 5 and 6 are subsequently oxidized by the FAD-linked oxidoreductase pytB and the cytochrome P450 monooxygenase pytD to form the fused gamma-pyrone core, resulting in pyranterreones 7 and 11, respectively. The hydroxy group at C-8 of pyranterreones 7 and 11 are dehydrated by the aspartyl protease pytH to form a delta-7 double bond to give pyranterreones 3 and 1, 2 accordingly. The exo-methylene of pyranterreone 3 could be reduced into a pendant methyl by reductase pytE to provide pyranterreone 4, also known as cordylactam. Pyranterreone 4 can be reconverted to pyranterreone 3 through pytB-catalyzed dehydrogenation or further oxidized to pyranterreones 9 and 10. The polypeptide is Cytochrome P450 monooxygenase pytD (Aspergillus terreus (strain NIH 2624 / FGSC A1156)).